Consider the following 128-residue polypeptide: Small ribosomal subunit protein eS8 (128 aa).

Belongs to the eukaryotic ribosomal protein eS8 family. As to quaternary structure, part of the 30S ribosomal subunit.

The polypeptide is Small ribosomal subunit protein eS8 (Methanococcus maripaludis (strain C6 / ATCC BAA-1332)).